A 686-amino-acid chain; its full sequence is Protein SDA1 homolog (686 aa).

Phosphoserine is present on residues S232, S234, and S236. Positions 254-315 (KKGSKNKKKL…SCKERFEVKM (62 aa)) form a coiled coil. The tract at residues 484–508 (LEKEENTENDEDGWESASLSEEEED) is disordered. Residues 490–508 (TENDEDGWESASLSEEEED) show a composition bias toward acidic residues. T551 is subject to Phosphothreonine. Positions 563 to 586 (MKKEMDAAPGKAQKRKYLDMDSDE) are disordered. Residues S584, S588, and S594 each carry the phosphoserine modification. A disordered region spans residues 604–649 (KPKSDKETRLATAMAGRTDRKEFVRKKTKINPFSSSTNKEKKKQKN).

The protein belongs to the SDA1 family.

The protein resides in the nucleus. It localises to the nucleolus. Functionally, required for 60S pre-ribosomal subunits export to the cytoplasm. The protein is Protein SDA1 homolog (Sdad1) of Rattus norvegicus (Rat).